The primary structure comprises 225 residues: C-reactive protein (225 aa).

A signal peptide spans 1–18 (MLVVFLCLLSVTLEATEG). A Pentraxin (PTX) domain is found at 23-225 (SGKVLQFKTA…TGNVLVATDN (203 aa)). Cysteines 54 and 116 form a disulfide. 5 residues coordinate Ca(2+): Asp-78, Asp-157, Pro-158, Asp-159, and Gln-169.

The protein belongs to the pentraxin family. Homotrimer. Requires Ca(2+) as cofactor.

The protein resides in the secreted. In terms of biological role, displays several functions associated with host defense: it promotes agglutination, bacterial capsular swelling, phagocytosis, and complement fixation through its calcium-dependent binding to phosphorylcholine. In Danio rerio (Zebrafish), this protein is C-reactive protein.